Here is a 413-residue protein sequence, read N- to C-terminus: MAKYENLVTRFLKYVKTETRSNEDSTTIPSTQTQVEFIKGLANELKGLGLQNVHISDESGYVFATLPSNLEDDANTKVVGFISHVDTADFNAHNVQPQIVENYDGESDIKLDEAGNFVLTTAEFPNLRNYKGHDLITTDGSTLLGADDKSGVAEIMSAMEYLQAHPEIKHGEIKVGFGPDEEIGTGADNFNVEDFGADIAYTVDGGPLGELEYETFNAAQAKLTFKGKDVHTGTAKNVMVNAIQLAINYQNSLPADEVPEKTEGREGFFHLFKFDGSVEEAHTTYIIRDHDRKHFEERKQLMLDIAERMNTELGEERVVIDLQDQYYNMREVLEKDMTAVDIAKEAMEDLGITPEIYPVRGGTDGSKISFMGLPTPNLFAGGENMHGRYEYVSTQVMEKATDVILEIVKLLAK.

H84 contacts Zn(2+). D86 is an active-site residue. Zn(2+) is bound at residue D147. E181 functions as the Proton acceptor in the catalytic mechanism. 3 residues coordinate Zn(2+): E182, D204, and H386.

Belongs to the peptidase M20B family. Zn(2+) serves as cofactor.

The protein resides in the cytoplasm. The catalysed reaction is Release of the N-terminal residue from a tripeptide.. Cleaves the N-terminal amino acid of tripeptides. The chain is Peptidase T from Ligilactobacillus salivarius (strain UCC118) (Lactobacillus salivarius).